The sequence spans 955 residues: Coiled-coil domain-containing protein 146 (955 aa).

The span at 1–17 (MEDSSTDTEKEEEEEKD) shows a compositional bias: acidic residues. The tract at residues 1–22 (MEDSSTDTEKEEEEEKDEKDQE) is disordered. Coiled-coil stretches lie at residues 114-141 (EAFS…KERE), 169-321 (GEME…AREN), 400-461 (STLS…LLRM), 534-640 (KAHQ…RNES), and 667-832 (NGEI…MKQA).

In terms of assembly, interacts with CCDC38 and CCDC42. Interacts with intraflagellar transport proteins IFT20 and IFT88. As to quaternary structure, (Microbial infection) Interacts with Chlamydia trachomatis incM/YT288. In host cells infected with C.trachomatis incM, CCDC146 is recruited to the periphery of the pathogen-containing vacuole but recruitment is not dependent on incM. As to expression, widely expressed.

Its subcellular location is the cytoplasm. It is found in the cytoskeleton. The protein resides in the microtubule organizing center. The protein localises to the centrosome. It localises to the centriole. Its subcellular location is the flagellum axoneme. It is found in the cilium basal body. The protein resides in the midbody. In terms of biological role, essential for sperm flagellum biogenesis and male fertility. The chain is Coiled-coil domain-containing protein 146 (CCDC146) from Homo sapiens (Human).